A 489-amino-acid chain; its full sequence is MFS-type transporter MFS19 (489 aa).

Basic and acidic residues predominate over residues 1-12 (MAHSTAGDRDPE). The disordered stretch occupies residues 1–42 (MAHSTAGDRDPEVGSEQHSSIAQLHTESMSDPWGDSNSPENP). The segment covering 16–41 (EQHSSIAQLHTESMSDPWGDSNSPEN) has biased composition (polar residues). A helical transmembrane segment spans residues 52–72 (FHVAIVSIFTLTANLAATMFA). Residues asparagine 83 and asparagine 86 are each glycosylated (N-linked (GlcNAc...) asparagine). 11 helical membrane-spanning segments follow: residues 91-111 (AMTVSLYVLGFAFGPLLLAPL), 127-147 (VYIAFTVGCAFSTNVSMFLVF), 149-169 (FLCGCAASGPMSIGGGTVADI), 180-200 (ALFAMGPLLGPVLGPIIGGYV), 208-228 (WTFRIILIMSGIIGLATMFFM), 282-302 (PIVLLISLYTGVLFGLIFLLF), 321-341 (GLAYLGLGIGMFLGLVVFSIL), 361-381 (LILMKWFGPITPLGCFMYGWS), 388-408 (WIVPILGTSIIGFGSLFVVIP), 425-445 (ALAANLLVRSPFGAFLGLVAA), and 454-474 (GWGNSVLGFITLAFTPVPWLF).

This sequence belongs to the major facilitator superfamily.

The protein localises to the cell membrane. Its function is as follows. MFS-type efflux pump involved in the modulation susceptibility to various compounds including cumyl hydroperoxide, potassium superoxide, many singlet oxygen-generating compounds (eosin Y, rose Bengal, hematoporphyrin, methylene blue, and cercosporin), and the cell wall biosynthesis inhibitor Congo red. Involved in oxidative stress tolerance, colonization, and lesion formation. This is MFS-type transporter MFS19 from Alternaria alternata (Alternaria rot fungus).